We begin with the raw amino-acid sequence, 159 residues long: 17 kDa surface antigen (159 aa).

The N-terminal stretch at 1 to 19 (MKLLSKIMIIALATSMLQA) is a signal peptide. A lipid anchor (N-palmitoyl cysteine) is attached at Cys-20. Cys-20 carries the S-diacylglycerol cysteine lipid modification.

It belongs to the rickettsiale 17 kDa surface antigen family.

It localises to the cell outer membrane. The protein is 17 kDa surface antigen (omp) of Rickettsia japonica (strain ATCC VR-1363 / YH).